A 400-amino-acid chain; its full sequence is tRNA-specific 2-thiouridylase MnmA (400 aa).

ATP-binding positions include 19 to 26 (AMSGGVDS) and Leu45. Residue Cys113 is the Nucleophile of the active site. Cys113 and Cys210 form a disulfide bridge. Residue Gly137 coordinates ATP. The interval 160 to 162 (RDQ) is interaction with tRNA. Cys210 acts as the Cysteine persulfide intermediate in catalysis.

The protein belongs to the MnmA/TRMU family.

The protein resides in the cytoplasm. The enzyme catalyses S-sulfanyl-L-cysteinyl-[protein] + uridine(34) in tRNA + AH2 + ATP = 2-thiouridine(34) in tRNA + L-cysteinyl-[protein] + A + AMP + diphosphate + H(+). Its function is as follows. Catalyzes the 2-thiolation of uridine at the wobble position (U34) of tRNA, leading to the formation of s(2)U34. This chain is tRNA-specific 2-thiouridylase MnmA, found in Nitrobacter hamburgensis (strain DSM 10229 / NCIMB 13809 / X14).